Here is a 336-residue protein sequence, read N- to C-terminus: GTPase Obg (336 aa).

Residues 1 to 159 (MKFLDETKVY…KTIWLRLKLI (159 aa)) enclose the Obg domain. Residues 160–327 (ADAGLVGLPN…ALRALRSVIA (168 aa)) enclose the OBG-type G domain. Residues 166–173 (GLPNAGKS), 191–195 (FTTLH), 212–215 (DIPG), 279–282 (SQID), and 308–310 (SAV) contribute to the GTP site. Positions 173 and 193 each coordinate Mg(2+).

The protein belongs to the TRAFAC class OBG-HflX-like GTPase superfamily. OBG GTPase family. In terms of assembly, monomer. Requires Mg(2+) as cofactor.

The protein resides in the cytoplasm. In terms of biological role, an essential GTPase which binds GTP, GDP and possibly (p)ppGpp with moderate affinity, with high nucleotide exchange rates and a fairly low GTP hydrolysis rate. Plays a role in control of the cell cycle, stress response, ribosome biogenesis and in those bacteria that undergo differentiation, in morphogenesis control. This chain is GTPase Obg, found in Rhizobium meliloti (strain 1021) (Ensifer meliloti).